The chain runs to 186 residues: ATP synthase subunit b (186 aa).

A helical transmembrane segment spans residues 28–48; the sequence is IVWSIIPFAVILFVFWKFVLP.

The protein belongs to the ATPase B chain family. In terms of assembly, F-type ATPases have 2 components, F(1) - the catalytic core - and F(0) - the membrane proton channel. F(1) has five subunits: alpha(3), beta(3), gamma(1), delta(1), epsilon(1). F(0) has three main subunits: a(1), b(2) and c(10-14). The alpha and beta chains form an alternating ring which encloses part of the gamma chain. F(1) is attached to F(0) by a central stalk formed by the gamma and epsilon chains, while a peripheral stalk is formed by the delta and b chains.

The protein resides in the cell membrane. F(1)F(0) ATP synthase produces ATP from ADP in the presence of a proton or sodium gradient. F-type ATPases consist of two structural domains, F(1) containing the extramembraneous catalytic core and F(0) containing the membrane proton channel, linked together by a central stalk and a peripheral stalk. During catalysis, ATP synthesis in the catalytic domain of F(1) is coupled via a rotary mechanism of the central stalk subunits to proton translocation. Its function is as follows. Component of the F(0) channel, it forms part of the peripheral stalk, linking F(1) to F(0). This chain is ATP synthase subunit b, found in Corynebacterium jeikeium (strain K411).